Here is a 430-residue protein sequence, read N- to C-terminus: Trigger factor (430 aa).

The region spanning 163–248 is the PPIase FKBP-type domain; that stretch reads GDIAVIDFEG…LNSLKRKNMP (86 aa).

This sequence belongs to the FKBP-type PPIase family. Tig subfamily.

The protein resides in the cytoplasm. The catalysed reaction is [protein]-peptidylproline (omega=180) = [protein]-peptidylproline (omega=0). Involved in protein export. Acts as a chaperone by maintaining the newly synthesized protein in an open conformation. Functions as a peptidyl-prolyl cis-trans isomerase. This is Trigger factor from Brevibacillus brevis (strain 47 / JCM 6285 / NBRC 100599).